A 186-amino-acid polypeptide reads, in one-letter code: Thiol:disulfide interchange protein CycY (186 aa).

An N-terminal signal peptide occupies residues 1–20 (MGRYTLALLPLIVFGGIAHG). A Thioredoxin domain is found at 47–182 (DAEPAAARRA…LVPAMEKALG (136 aa)). Cys-80 and Cys-83 are oxidised to a cystine.

Belongs to the thioredoxin family. DsbE subfamily.

The protein resides in the periplasm. Required for disulfide bond formation in some periplasmic proteins. Also acts as a disulfide oxidoreductase in cytochromes c biogenesis. The cysteines of apocytochromes c must be in the reduced state for covalent linkage between the two moieties to occur. The chain is Thiol:disulfide interchange protein CycY (cycY) from Rhizobium leguminosarum bv. viciae.